The sequence spans 261 residues: Kallikrein 1-related peptidase b16 (261 aa).

Positions 1–18 (MWFLILFLALSLGGIDAA) are cleaved as a signal peptide. Residues 19–24 (PPVQSR) constitute a propeptide, activation peptide. One can recognise a Peptidase S1 domain in the interval 25-258 (IVGGFKCEKN…FNSWIKDTMM (234 aa)). Cystine bridges form between Cys31/Cys173, Cys50/Cys66, Cys152/Cys219, Cys184/Cys198, and Cys209/Cys234. His65 (charge relay system) is an active-site residue. Asn102 is a glycosylation site (N-linked (GlcNAc...) asparagine). Residue Asp120 is the Charge relay system of the active site. Catalysis depends on Ser213, which acts as the Charge relay system.

Belongs to the peptidase S1 family. Kallikrein subfamily.

It catalyses the reaction Cleavage of the Leu-|-Leu bond in synthetic tetradecapeptide renin substrate, to produce angiotensin I, but not active on natural angiotensinogen. Also hydrolyzes Bz-Arg-p-nitroanilide.. In Mus musculus (Mouse), this protein is Kallikrein 1-related peptidase b16 (Klk1b16).